A 407-amino-acid chain; its full sequence is Arrestin domain-containing protein 2 (407 aa).

The protein belongs to the arrestin family. Interacts with WWP1 (via WW domains).

The protein is Arrestin domain-containing protein 2 (Arrdc2) of Mus musculus (Mouse).